We begin with the raw amino-acid sequence, 182 residues long: CDP-diacylglycerol--glycerol-3-phosphate 3-phosphatidyltransferase (182 aa).

Residues 1 to 12 are Cytoplasmic-facing; sequence MQLNIPTWLTLF. A helical transmembrane segment spans residues 13–37; the sequence is RVVLIPFFVLAFYLPFVWAPMVCAI. Topologically, residues 38 to 60 are periplasmic; it reads IFVFAAATDWFDGFLARRWKQTT. The chain crosses the membrane as a helical span at residues 61-81; the sequence is RFGAFLDPVADKVMVAIALVL. Residues 82–86 lie on the Cytoplasmic side of the membrane; sequence VAEHY. A helical membrane pass occupies residues 87–107; that stretch reads HVWWITLPAATMIAREIIISS. Residues 108–145 lie on the Periplasmic side of the membrane; sequence LREWMAEIGKRSSVAVSWIGKVKTTAQMGSLVGLLWRP. A helical transmembrane segment spans residues 146-168; that stretch reads DHNIELASFVLLYIAAVLTFWSM. The Cytoplasmic portion of the chain corresponds to 169-181; it reads FQYLNAAWKDLLE.

The protein belongs to the CDP-alcohol phosphatidyltransferase class-I family.

It is found in the cell inner membrane. It catalyses the reaction a CDP-1,2-diacyl-sn-glycerol + sn-glycerol 3-phosphate = a 1,2-diacyl-sn-glycero-3-phospho-(1'-sn-glycero-3'-phosphate) + CMP + H(+). It participates in phospholipid metabolism; phosphatidylglycerol biosynthesis; phosphatidylglycerol from CDP-diacylglycerol: step 1/2. Its function is as follows. Catalyzes the conversion of cytidine diphosphate diacylglycerol (CDP-DG) and glycerol 3-phosphate into phosphatidylglycerol. Essential for the synthesis of anionic phospholipids, thereby playing a role in balancing the ratio of zwitterionic and anionic phospholipids, which is thought to be important for normal membrane function. In Yersinia enterocolitica serotype O:8 / biotype 1B (strain NCTC 13174 / 8081), this protein is CDP-diacylglycerol--glycerol-3-phosphate 3-phosphatidyltransferase.